The sequence spans 214 residues: Glycerol-3-phosphate acyltransferase (214 aa).

5 consecutive transmembrane segments (helical) span residues 4 to 24 (LIVA…IVSA), 52 to 72 (AAIL…WFVV), 82 to 102 (DTSV…PAFF), 118 to 138 (LAIN…VAFF), and 159 to 179 (FLFG…LLVW).

It belongs to the PlsY family. As to quaternary structure, probably interacts with PlsX.

The protein localises to the cell inner membrane. It carries out the reaction an acyl phosphate + sn-glycerol 3-phosphate = a 1-acyl-sn-glycero-3-phosphate + phosphate. The protein operates within lipid metabolism; phospholipid metabolism. Its function is as follows. Catalyzes the transfer of an acyl group from acyl-phosphate (acyl-PO(4)) to glycerol-3-phosphate (G3P) to form lysophosphatidic acid (LPA). This enzyme utilizes acyl-phosphate as fatty acyl donor, but not acyl-CoA or acyl-ACP. This chain is Glycerol-3-phosphate acyltransferase, found in Paraburkholderia xenovorans (strain LB400).